A 507-amino-acid chain; its full sequence is O-fucosyltransferase 30 (507 aa).

Residues 26–46 (AIFLCSVSILVVFFIVVFFIT) traverse the membrane as a helical; Signal-anchor for type II membrane protein segment. Asparagine 110, asparagine 146, asparagine 398, and asparagine 410 each carry an N-linked (GlcNAc...) asparagine glycan.

The protein belongs to the glycosyltransferase GT106 family.

The protein localises to the membrane. Its pathway is glycan metabolism. In Arabidopsis thaliana (Mouse-ear cress), this protein is O-fucosyltransferase 30.